Reading from the N-terminus, the 479-residue chain is FAD-dependent monooxygenase atmM (479 aa).

The helical transmembrane segment at I10–I30 threads the bilayer. 5 residues coordinate FAD: E36, G50, R109, D309, and A322. A helical transmembrane segment spans residues W445–I465.

It belongs to the paxM FAD-dependent monooxygenase family. Requires FAD as cofactor.

It localises to the membrane. Its pathway is secondary metabolite biosynthesis. Its function is as follows. FAD-dependent monooxygenase; part of the ATM1 gene cluster that mediates the biosynthesis of aflatrem, a tremorgenic mycotoxin with acute neurotoxic effects. Synthesis of geranylgeranyl diphosphate (GGPP) by AtmG (a GGPP synthase) precedes condensation of GGPP with indole 3-glycerol phosphate, followed by epoxidation and cyclization by AtmM (a FAD-dependent monooxygenase) and AtmC (a prenyltransferase) to produce paspaline. AtmB is also essential for paspaline production, but its exact role has not been identified yet. AtmP, a cytochrome P450 monooxygenase, subsequently converts paspaline to 13-desoxypaxilline via PC-M6 by removal of the C-30 methyl group and oxidation at C-10. AtmQ, a cytochrome P450 monooxygenase, then catalyzes the oxidation of 13-desoxypaxilline, first at C-7 to produce paspalicine and then at C-13 to form paspalinine. Finally, AtmD prenylates paspalinine to form aflatrem. The sequence is that of FAD-dependent monooxygenase atmM from Aspergillus flavus.